We begin with the raw amino-acid sequence, 452 residues long: Serine--tRNA ligase (452 aa).

L-serine is bound at residue 251-253 (TSE). 282-284 (RSE) is a binding site for ATP. Glu305 serves as a coordination point for L-serine. 369–372 (EISS) contributes to the ATP binding site. Ser404 provides a ligand contact to L-serine.

Belongs to the class-II aminoacyl-tRNA synthetase family. Type-1 seryl-tRNA synthetase subfamily. Homodimer. The tRNA molecule binds across the dimer.

It is found in the cytoplasm. The enzyme catalyses tRNA(Ser) + L-serine + ATP = L-seryl-tRNA(Ser) + AMP + diphosphate + H(+). The catalysed reaction is tRNA(Sec) + L-serine + ATP = L-seryl-tRNA(Sec) + AMP + diphosphate + H(+). It participates in aminoacyl-tRNA biosynthesis; selenocysteinyl-tRNA(Sec) biosynthesis; L-seryl-tRNA(Sec) from L-serine and tRNA(Sec): step 1/1. In terms of biological role, catalyzes the attachment of serine to tRNA(Ser). Is also able to aminoacylate tRNA(Sec) with serine, to form the misacylated tRNA L-seryl-tRNA(Sec), which will be further converted into selenocysteinyl-tRNA(Sec). This is Serine--tRNA ligase from Albidiferax ferrireducens (strain ATCC BAA-621 / DSM 15236 / T118) (Rhodoferax ferrireducens).